Here is a 237-residue protein sequence, read N- to C-terminus: Ribose-5-phosphate isomerase A (237 aa).

Substrate is bound by residues 30–33 (SGST), 87–90 (DGAD), and 100–103 (KGGG). Catalysis depends on glutamate 109, which acts as the Proton acceptor. Lysine 127 contacts substrate.

Belongs to the ribose 5-phosphate isomerase family. In terms of assembly, homodimer.

The enzyme catalyses aldehydo-D-ribose 5-phosphate = D-ribulose 5-phosphate. Its pathway is carbohydrate degradation; pentose phosphate pathway; D-ribose 5-phosphate from D-ribulose 5-phosphate (non-oxidative stage): step 1/1. Catalyzes the reversible conversion of ribose-5-phosphate to ribulose 5-phosphate. The protein is Ribose-5-phosphate isomerase A of Synechococcus sp. (strain RCC307).